The sequence spans 514 residues: 2,3-bisphosphoglycerate-independent phosphoglycerate mutase (514 aa).

Mn(2+) is bound by residues D14 and S64. S64 acts as the Phosphoserine intermediate in catalysis. Substrate contacts are provided by residues H125, 155 to 156 (RD), R187, R193, 263 to 266 (RADR), and K336. 5 residues coordinate Mn(2+): D403, H407, D444, H445, and H463.

The protein belongs to the BPG-independent phosphoglycerate mutase family. As to quaternary structure, monomer. Requires Mn(2+) as cofactor.

The enzyme catalyses (2R)-2-phosphoglycerate = (2R)-3-phosphoglycerate. It functions in the pathway carbohydrate degradation; glycolysis; pyruvate from D-glyceraldehyde 3-phosphate: step 3/5. In terms of biological role, catalyzes the interconversion of 2-phosphoglycerate and 3-phosphoglycerate. This is 2,3-bisphosphoglycerate-independent phosphoglycerate mutase from Shewanella sp. (strain MR-4).